A 400-amino-acid chain; its full sequence is Formate-dependent phosphoribosylglycinamide formyltransferase (400 aa).

N(1)-(5-phospho-beta-D-ribosyl)glycinamide contacts are provided by residues 22–23 (EL) and E82. Residues R115, K156, 161–166 (SSGKGQ), 196–199 (EGFI), and E204 contribute to the ATP site. Residues 120 to 309 (RLAAETLGLP…EFALHARAIL (190 aa)) enclose the ATP-grasp domain. Mg(2+)-binding residues include E268 and E280. N(1)-(5-phospho-beta-D-ribosyl)glycinamide-binding positions include D287, K361, and 368–369 (RR).

It belongs to the PurK/PurT family. As to quaternary structure, homodimer.

The enzyme catalyses N(1)-(5-phospho-beta-D-ribosyl)glycinamide + formate + ATP = N(2)-formyl-N(1)-(5-phospho-beta-D-ribosyl)glycinamide + ADP + phosphate + H(+). It functions in the pathway purine metabolism; IMP biosynthesis via de novo pathway; N(2)-formyl-N(1)-(5-phospho-D-ribosyl)glycinamide from N(1)-(5-phospho-D-ribosyl)glycinamide (formate route): step 1/1. In terms of biological role, involved in the de novo purine biosynthesis. Catalyzes the transfer of formate to 5-phospho-ribosyl-glycinamide (GAR), producing 5-phospho-ribosyl-N-formylglycinamide (FGAR). Formate is provided by PurU via hydrolysis of 10-formyl-tetrahydrofolate. The chain is Formate-dependent phosphoribosylglycinamide formyltransferase from Xanthomonas oryzae pv. oryzae (strain KACC10331 / KXO85).